Here is a 284-residue protein sequence, read N- to C-terminus: 2-dehydro-3-deoxyphosphooctonate aldolase (284 aa).

Belongs to the KdsA family.

It localises to the cytoplasm. It catalyses the reaction D-arabinose 5-phosphate + phosphoenolpyruvate + H2O = 3-deoxy-alpha-D-manno-2-octulosonate-8-phosphate + phosphate. It functions in the pathway carbohydrate biosynthesis; 3-deoxy-D-manno-octulosonate biosynthesis; 3-deoxy-D-manno-octulosonate from D-ribulose 5-phosphate: step 2/3. The protein operates within bacterial outer membrane biogenesis; lipopolysaccharide biosynthesis. The polypeptide is 2-dehydro-3-deoxyphosphooctonate aldolase (Burkholderia vietnamiensis (strain G4 / LMG 22486) (Burkholderia cepacia (strain R1808))).